The following is a 344-amino-acid chain: Phosphoribosylformylglycinamidine cyclo-ligase (344 aa).

It belongs to the AIR synthase family.

The protein resides in the cytoplasm. The enzyme catalyses 2-formamido-N(1)-(5-O-phospho-beta-D-ribosyl)acetamidine + ATP = 5-amino-1-(5-phospho-beta-D-ribosyl)imidazole + ADP + phosphate + H(+). Its pathway is purine metabolism; IMP biosynthesis via de novo pathway; 5-amino-1-(5-phospho-D-ribosyl)imidazole from N(2)-formyl-N(1)-(5-phospho-D-ribosyl)glycinamide: step 2/2. The protein is Phosphoribosylformylglycinamidine cyclo-ligase of Neisseria gonorrhoeae (strain ATCC 700825 / FA 1090).